Reading from the N-terminus, the 130-residue chain is Transcription antitermination protein NusB (130 aa).

Belongs to the NusB family.

In terms of biological role, involved in transcription antitermination. Required for transcription of ribosomal RNA (rRNA) genes. Binds specifically to the boxA antiterminator sequence of the ribosomal RNA (rrn) operons. The polypeptide is Transcription antitermination protein NusB (Bacillus cereus (strain ATCC 10987 / NRS 248)).